The primary structure comprises 483 residues: ATP synthase subunit beta (483 aa).

Position 169 to 176 (169 to 176 (GGAGVGKT)) interacts with ATP.

Belongs to the ATPase alpha/beta chains family. As to quaternary structure, F-type ATPases have 2 components, CF(1) - the catalytic core - and CF(0) - the membrane proton channel. CF(1) has five subunits: alpha(3), beta(3), gamma(1), delta(1), epsilon(1). CF(0) has three main subunits: a(1), b(2) and c(9-12). The alpha and beta chains form an alternating ring which encloses part of the gamma chain. CF(1) is attached to CF(0) by a central stalk formed by the gamma and epsilon chains, while a peripheral stalk is formed by the delta and b chains.

It localises to the cell membrane. It carries out the reaction ATP + H2O + 4 H(+)(in) = ADP + phosphate + 5 H(+)(out). Its function is as follows. Produces ATP from ADP in the presence of a proton gradient across the membrane. The catalytic sites are hosted primarily by the beta subunits. In Corynebacterium glutamicum (strain ATCC 13032 / DSM 20300 / JCM 1318 / BCRC 11384 / CCUG 27702 / LMG 3730 / NBRC 12168 / NCIMB 10025 / NRRL B-2784 / 534), this protein is ATP synthase subunit beta.